A 48-amino-acid polypeptide reads, in one-letter code: Delta-stichotoxin-Hcr1a (48 aa).

3 disulfides stabilise this stretch: Cys-3/Cys-43, Cys-5/Cys-33, and Cys-26/Cys-44. Lys-48 is subject to Lysine amide; partial; in Delta-stichotoxin-Hcr1f.

It belongs to the sea anemone sodium channel inhibitory toxin family. Type II subfamily. As to quaternary structure, probably composed of two peptide chains of 12 and 35 residues connected by two disulfide bonds (Cys-3-Cys-43 and Cys-5-Cys-33). In terms of processing, delta-SHTX-Hcr1f (RTX-VI) may be the result of post-translational modification of delta-SHTX-Hcr1a (RTX-III), which would consist of Arg-13 cleavage.

The protein localises to the secreted. It localises to the nematocyst. Functionally, binds to site 3 of voltage-gated sodium channels and inhibits the inactivation process. Specifically inhibits mammalian Nav1.3/SCN3A and Nav1.6/SCN8A sodium channels, as well as insect BgNav1 and VdNav1 sodium channels. Binds to site 3 of voltage-gated sodium channels and inhibits the inactivation process. Specifically inhibits mammalian Nav1.2/SCN3A (low inhibition) and Nav1.6/SCN8A sodium channels, as well as insect BgNav1 and VdNav1 sodium channels. This chain is Delta-stichotoxin-Hcr1a, found in Radianthus crispa (Leathery sea anemone).